The sequence spans 148 residues: Ribonuclease H (148 aa).

The region spanning 1-142 (MSDSVEMFTD…ADQLANRGVD (142 aa)) is the RNase H type-1 domain. Mg(2+) contacts are provided by Asp10, Glu48, Asp70, and Asp134.

This sequence belongs to the RNase H family. In terms of assembly, monomer. Mg(2+) serves as cofactor.

The protein resides in the cytoplasm. The enzyme catalyses Endonucleolytic cleavage to 5'-phosphomonoester.. In terms of biological role, endonuclease that specifically degrades the RNA of RNA-DNA hybrids. The chain is Ribonuclease H from Pseudomonas putida (strain ATCC 700007 / DSM 6899 / JCM 31910 / BCRC 17059 / LMG 24140 / F1).